A 116-amino-acid chain; its full sequence is Iron-sulfur cluster insertion protein ErpA (116 aa).

The iron-sulfur cluster site is built by cysteine 44, cysteine 108, and cysteine 110.

It belongs to the HesB/IscA family. In terms of assembly, homodimer. The cofactor is iron-sulfur cluster.

Its function is as follows. Required for insertion of 4Fe-4S clusters for at least IspG. The chain is Iron-sulfur cluster insertion protein ErpA from Francisella philomiragia subsp. philomiragia (strain ATCC 25017 / CCUG 19701 / FSC 153 / O#319-036).